The sequence spans 1309 residues: Target of rapamycin complex 2 subunit ste20 (1309 aa).

An REM-1 domain is found at Asp24–Glu110. A disordered region spans residues Gln105 to Arg128. The segment covering Thr113–Arg128 has biased composition (polar residues). Ser151 carries the phosphoserine modification. The interval Asn183–Leu205 is disordered. Residues Asp194–Leu205 show a composition bias toward polar residues. A run of 6 helical transmembrane segments spans residues Leu285–Ser305, Leu392–Leu412, Val504–Leu524, Thr564–Ile584, Leu926–Cys946, and Leu984–Ile1004. The residue at position 1203 (Thr1203) is a Phosphothreonine.

The protein belongs to the RICTOR family. As to quaternary structure, the target of rapamycin complex 2 (TORC2) is composed of at least bit61, pop3/wat1, sin1, ste20 and tor1. Post-translationally, either Ser-203 or Ser-204 are phosphorylated as well.

The protein resides in the membrane. Component of TORC2, which regulates multiple cellular processes to control cell growth in response to environmental signals. TORC2 is required for cell survival under various stress conditions. TORC2 positively controls G1 cell-cycle arrest, sexual development and amino acid uptake. Positively regulates amino acid uptake through the control of expression of amino acid permeases. The chain is Target of rapamycin complex 2 subunit ste20 from Schizosaccharomyces pombe (strain 972 / ATCC 24843) (Fission yeast).